Reading from the N-terminus, the 277-residue chain is UBX domain-containing protein 8 (277 aa).

A topological domain (cytoplasmic) is located at residue Met1. Residues 2–22 (ASRGVVGLFLLSALPLLCLEL) form a helical membrane-spanning segment. At 23-33 (RRGIPSLGIKD) the chain is on the lumenal side. The chain crosses the membrane as a helical span at residues 34–54 (LILLSGRIFLLLALLTLVISV). The Cytoplasmic segment spans residues 55–277 (TTSWFNSLKP…NVEEKEQSSQ (223 aa)). The segment at 64 to 89 (PSQGHLKEGEKENEKRRRLVRERQQE) is disordered. Over residues 68 to 89 (HLKEGEKENEKRRRLVRERQQE) the composition is skewed to basic and acidic residues. Residues 193–269 (TAEEVVTVAL…GITVDTVLNV (77 aa)) form the UBX domain.

Interacts with SYVN1 and VCP. In terms of tissue distribution, highly expressed in gonads. In testis, expressed in post-meiotic round spermatids, while in ovaries it is expressed in granulosa cells.

It localises to the endoplasmic reticulum membrane. Its function is as follows. Involved in endoplasmic reticulum-associated degradation (ERAD) for misfolded lumenal proteins, possibly by tethering VCP to the endoplasmic reticulum membrane. May play a role in reproduction. In Mus musculus (Mouse), this protein is UBX domain-containing protein 8 (Ubxn8).